Reading from the N-terminus, the 170-residue chain is AP-5 complex subunit sigma-1 (170 aa).

As to quaternary structure, probably part of the adaptor protein complex 5 (AP-5) a tetramer composed of AP5B1, AP5M1, AP5S1 and AP5Z1. Interacts with ZFYVE26 and SPG11.

The protein localises to the cytoplasm. It is found in the cytosol. The protein resides in the late endosome membrane. Its subcellular location is the lysosome membrane. As part of AP-5, a probable fifth adaptor protein complex it may be involved in endosomal transport. The polypeptide is AP-5 complex subunit sigma-1 (Ap5s1) (Mus musculus (Mouse)).